Consider the following 692-residue polypeptide: MRYENLLVEIGTEELPPKALGKLAQAFADNLQGALDTAELKYTSIKWFASPRRLAVNVIGLAEQQEDKLIEKKGPAVSVAFDESGQATKAAQGWARSNGITVEQAERLTTDKGEWLLFKGEAKGEQVSSLLPAMIDGALKKLPIPKAMRWGSSSIQFIRPVHTVTMLFGADVIEGNILGIDSDRVINGHRFHGEKQFSLSHADDYLAQLEAHYVLADFSARKDKIRHQVNAAAQKEDAVADMNEDLLDEVTALVEWPVALTASFDDSFLEVPKEALIYTMKDDQKYFPLIDQNGQLKSRFVFVTNIESKDPMQIISGNEKVIRPRLADAEFFFNTDKKTTLESRLESLKTVLFQKQLGTLYEKSQRISELAGTIANMLSSDISQASRAGLLSKTDLMTNMVMEFPDVQGVMGMHYAKHDGEHDKVALALNEQYMPRFAGDQLPTSNISCAVAIADKIDTLVGIFGIGQVPKGDKDPFALRRAAIGVLRISVEMKLPLDLTTLVQASINSFGTKLTHVEDLESQVIDFILGRFRAWYQDQHIDIDVIQAVAARRPTKPADFAARIEAVSAFKSLASGLALASANKRVANILAKNKVTDTNSINSSLFESEHEAALADAMSDIEETVNAFVVDANYQGVFTELATLHDKVDAFFDNVMVMAEDENVRNNRLALLSKLRTLFLLVADISILNQQQ.

This sequence belongs to the class-II aminoacyl-tRNA synthetase family. Tetramer of two alpha and two beta subunits.

It is found in the cytoplasm. The catalysed reaction is tRNA(Gly) + glycine + ATP = glycyl-tRNA(Gly) + AMP + diphosphate. The sequence is that of Glycine--tRNA ligase beta subunit from Pseudoalteromonas atlantica (strain T6c / ATCC BAA-1087).